Here is a 232-residue protein sequence, read N- to C-terminus: Ras-related protein RabP (232 aa).

Residue 15-22 coordinates GTP; it reads GNYGVGKS. An Effector region motif is present at residues 35 to 40; it reads DNTTGF. Residues 58 to 62 and 118 to 121 each bind GTP; these read DTSGQ and NKFD. 2 S-geranylgeranyl cysteine lipidation sites follow: cysteine 229 and cysteine 230.

Belongs to the small GTPase superfamily. Rab family.

The protein resides in the cell membrane. In Dictyostelium discoideum (Social amoeba), this protein is Ras-related protein RabP (rabP).